Reading from the N-terminus, the 354-residue chain is MSRRQRGVALLIVMLMLSLMVTIAASITERSGKAWQRTSNLLNRTQARWYALGAEALISNVLQRDAQASPESTFIGQPWSKVDHQMMADGTEIRAQALDGQACLNLNALSPARNVTPNNASGNNTSGNNNAANGSSGNGNSPQPPKVGTSEQVPYAAQVFRQLMIVLGEDPKQAERITDALRDWLDEDSEPLMNGAEDDSYVNFHPGNQRMTDVTELRAVMGMDAALYRRLLPYVCVLPVDKLAINVNTLMPGSAPLLSALFMGDISLDMAERILQQRPPQGWRNLNDFMGMSALPESGKNGARQVLVIKSDWFFADIQIRVDDSEFYQRSLFHRGKQIEVVQRQYGGYRTVNP.

A propeptide spans methionine 1–glycine 7 (leader sequence). The helical transmembrane segment at valine 8–threonine 28 threads the bilayer. Topologically, residues glutamate 29–proline 354 are periplasmic. Positions asparagine 114–glutamate 151 are disordered. The span at asparagine 118–serine 141 shows a compositional bias: low complexity.

This sequence belongs to the GSP K family. In terms of assembly, type II secretion is composed of four main components: the outer membrane complex, the inner membrane complex, the cytoplasmic secretion ATPase and the periplasm-spanning pseudopilus. Interacts with core component OutG. Post-translationally, cleaved by prepilin peptidase.

The protein resides in the cell inner membrane. Its function is as follows. Component of the type II secretion system required for the energy-dependent secretion of extracellular factors such as proteases and toxins from the periplasm. Plays a role in pseudopilus assembly and seems to control its length. Interacts with the pseudopilus tip complex that is critical for the recognition and binding of secretion substrates. This is Type II secretion system protein K (outK) from Dickeya chrysanthemi (Pectobacterium chrysanthemi).